The following is a 437-amino-acid chain: Probable eukaryotic translation initiation factor 5-2 (437 aa).

Residue G29–T36 coordinates GTP. Composition is skewed to basic and acidic residues over residues E148 to K179 and K191 to N212. Disordered stretches follow at residues E148–D231 and E262–E284. Position 201 is a phosphoserine; by CK2 (S201). Over residues A213 to V226 the composition is skewed to acidic residues. The residue at position 230 (T230) is a Phosphothreonine; by CK2. Residues E278 to E436 form the W2 domain. A phosphoserine; by CK2 mark is found at S428, S431, and S433.

Belongs to the eIF-2-beta/eIF-5 family. In terms of processing, phosphorylated at Ser-201, Thr-230, Ser-428, Ser-431, and Ser-433 by CK2.

In terms of biological role, catalyzes the hydrolysis of GTP bound to the 40S ribosomal initiation complex (40S.mRNA.Met-tRNA[F].eIF-2.GTP) with the subsequent joining of a 60S ribosomal subunit resulting in the release of eIF-2 and the guanine nucleotide. The subsequent joining of a 60S ribosomal subunit results in the formation of a functional 80S initiation complex (80S.mRNA.Met-tRNA[F]). This chain is Probable eukaryotic translation initiation factor 5-2, found in Arabidopsis thaliana (Mouse-ear cress).